The sequence spans 132 residues: Small ribosomal subunit protein uS11 (132 aa).

This sequence belongs to the universal ribosomal protein uS11 family. In terms of assembly, part of the 30S ribosomal subunit. Interacts with proteins S7 and S18. Binds to IF-3.

Its function is as follows. Located on the platform of the 30S subunit, it bridges several disparate RNA helices of the 16S rRNA. Forms part of the Shine-Dalgarno cleft in the 70S ribosome. This is Small ribosomal subunit protein uS11 from Legionella pneumophila (strain Paris).